The sequence spans 63 residues: MLYWALIFLIVAIVAGLFGFRGVASAATGIAKVLFFLFIVMFIVLLVFSLLGGTPEPVVIVKP.

2 helical membrane passes run 4–24 (WALIFLIVAIVAGLFGFRGVA) and 33–53 (VLFFLFIVMFIVLLVFSLLGG).

Belongs to the UPF0391 family.

Its subcellular location is the cell membrane. The polypeptide is UPF0391 membrane protein lpg2415 (Legionella pneumophila subsp. pneumophila (strain Philadelphia 1 / ATCC 33152 / DSM 7513)).